The primary structure comprises 596 residues: Probable ABC transporter ECU01_0200/ECU01_1410 (596 aa).

A run of 3 helical transmembrane segments spans residues 26 to 46 (ALMA…VMSI), 173 to 193 (LVPI…MLRI), and 289 to 309 (LSVL…LGGI). The region spanning 39–318 (KWFDVMSIKR…IARDLGFWLT (280 aa)) is the ABC transmembrane type-1 domain. Residues 361–593 (VEFDDVSFAY…RGMYWRMKTA (233 aa)) form the ABC transporter domain. ATP is bound by residues tyrosine 370 and 400–411 (GRPGSGKSTILR).

This sequence belongs to the ABC transporter superfamily. ABCB family. Heavy Metal importer (TC 3.A.1.210) subfamily.

Its subcellular location is the membrane. The sequence is that of Probable ABC transporter ECU01_0200/ECU01_1410 from Encephalitozoon cuniculi (strain GB-M1) (Microsporidian parasite).